Here is a 154-residue protein sequence, read N- to C-terminus: Protein X (154 aa).

The segment at 68 to 117 (PCALRFTSARRMETTVNAHQFLPKVLYKRTLGLSVMSTTDLEAYFKDCLF) is mitochondrial targeting sequence.

It belongs to the orthohepadnavirus protein X family. May form homodimer. May interact with host CEBPA, CFLAR, CREB1, DDB1, E4F1, HBXIP, HSPD1/HSP60, NFKBIA, POLR2E and SMAD4. Interacts with host SMC5-SMC6 complex and induces its degradation. Interacts with host TRPC4AP; leading to prevent ubiquitination of TRPC4AP. Interacts with host PLSCR1; this interaction promotes ubiquitination and degradation of HBx and impairs HBx-mediated cell proliferation. In terms of processing, a fraction may be phosphorylated in insect cells and HepG2 cells, a human hepatoblastoma cell line. Phosphorylated in vitro by host protein kinase C or mitogen-activated protein kinase. N-acetylated in insect cells.

It localises to the host cytoplasm. Its subcellular location is the host nucleus. The protein resides in the host mitochondrion. Multifunctional protein that plays a role in silencing host antiviral defenses and promoting viral transcription. Does not seem to be essential for HBV infection. May be directly involved in development of cirrhosis and liver cancer (hepatocellular carcinoma). Most of cytosolic activities involve modulation of cytosolic calcium. The effect on apoptosis is controversial depending on the cell types in which the studies have been conducted. May induce apoptosis by localizing in mitochondria and causing loss of mitochondrial membrane potential. May also modulate apoptosis by binding host CFLAR, a key regulator of the death-inducing signaling complex (DISC). Promotes viral transcription by using the host E3 ubiquitin ligase DDB1 to target the SMC5-SMC6 complex to proteasomal degradation. This host complex would otherwise bind to viral episomal DNA, and prevents its transcription. Moderately stimulates transcription of many different viral and cellular transcription elements. Promoters and enhancers stimulated by HBx contain DNA binding sites for NF-kappa-B, AP-1, AP-2, c-EBP, ATF/CREB, or the calcium-activated factor NF-AT. The chain is Protein X from Homo sapiens (Human).